The primary structure comprises 234 residues: NAD-dependent protein deacylase (234 aa).

Residues 1-234 form the Deacetylase sirtuin-type domain; it reads MKNLVILSGA…IEMASQEMLK (234 aa). 9–28 contributes to the NAD(+) binding site; that stretch reads GAGISAESGIKTFRDAGGLW. 2 residues coordinate substrate: Tyr53 and Arg56. 86–89 lines the NAD(+) pocket; sequence QNVD. The active-site Proton acceptor is the His104. Residues 169–171 and Met217 each bind NAD(+); that span reads GTS.

The protein belongs to the sirtuin family. Class III subfamily.

Its subcellular location is the cytoplasm. It catalyses the reaction N(6)-acetyl-L-lysyl-[protein] + NAD(+) + H2O = 2''-O-acetyl-ADP-D-ribose + nicotinamide + L-lysyl-[protein]. It carries out the reaction N(6)-succinyl-L-lysyl-[protein] + NAD(+) + H2O = 2''-O-succinyl-ADP-D-ribose + nicotinamide + L-lysyl-[protein]. Functionally, NAD-dependent lysine deacetylase and desuccinylase that specifically removes acetyl and succinyl groups on target proteins. Modulates the activities of several proteins which are inactive in their acylated form. This is NAD-dependent protein deacylase from Helicobacter pylori (strain J99 / ATCC 700824) (Campylobacter pylori J99).